Reading from the N-terminus, the 254-residue chain is 5-oxoprolinase subunit A (254 aa).

It belongs to the LamB/PxpA family. Forms a complex composed of PxpA, PxpB and PxpC.

The enzyme catalyses 5-oxo-L-proline + ATP + 2 H2O = L-glutamate + ADP + phosphate + H(+). Its function is as follows. Catalyzes the cleavage of 5-oxoproline to form L-glutamate coupled to the hydrolysis of ATP to ADP and inorganic phosphate. This Rhodopseudomonas palustris (strain BisB5) protein is 5-oxoprolinase subunit A.